A 147-amino-acid polypeptide reads, in one-letter code: METQRASLCLGRWSLWLLLLALVVPSASAQALSYREAVLRAVDRLNEQSSEANLYRLLELDQPPKADEDPGTPKPVSFTVKETVCPRPTRQPPELCDFKENGRVKQCVGTVTLDQIKDPLDITCNEVQGVRGGRLCYCRRRFCICVG.

Residues 1–29 (METQRASLCLGRWSLWLLLLALVVPSASA) form the signal peptide. The propeptide occupies 30–130 (QALSYREAVL…DITCNEVQGV (101 aa)). The tract at residues 61 to 80 (DQPPKADEDPGTPKPVSFTV) is disordered. Disulfide bonds link Cys-85-Cys-96, Cys-107-Cys-124, Cys-136-Cys-145, and Cys-138-Cys-143. A Valine amide modification is found at Val-146.

It belongs to the cathelicidin family.

It is found in the secreted. In terms of biological role, microbicidal activity. Active against E.coli, Listeria monocytogenes and C.albicans, in vitro. This chain is Protegrin-2 (NPG2), found in Sus scrofa (Pig).